Consider the following 209-residue polypeptide: Xanthine phosphoribosyltransferase 1 (209 aa).

Ser79 carries the post-translational modification Phosphoserine.

It is found in the cytoplasm. May act as a xanthine phosphoribosyltransferase involved in the synthesis of purine nucleotides. Such activity is however unclear in vivo. The polypeptide is Xanthine phosphoribosyltransferase 1 (XPT1) (Saccharomyces cerevisiae (strain ATCC 204508 / S288c) (Baker's yeast)).